Consider the following 129-residue polypeptide: Fluoride-specific ion channel FluC (129 aa).

3 helical membrane-spanning segments follow: residues 20–40, 67–87, and 96–116; these read WFLGLMLNAIFLPIPLGTLAA, LLIITGFLGGLTTFSTFTAEI, and IMTAVAAIVLHVCGSLIMMLL. Residues G75 and T78 each coordinate Na(+).

The protein belongs to the fluoride channel Fluc/FEX (TC 1.A.43) family.

It is found in the cell inner membrane. It carries out the reaction fluoride(in) = fluoride(out). Its activity is regulated as follows. Na(+) is not transported, but it plays an essential structural role and its presence is essential for fluoride channel function. Functionally, fluoride-specific ion channel. Important for reducing fluoride concentration in the cell, thus reducing its toxicity. The polypeptide is Fluoride-specific ion channel FluC (Desulfovibrio desulfuricans (strain ATCC 27774 / DSM 6949 / MB)).